A 360-amino-acid chain; its full sequence is uncharacterized protein (360 aa).

Helical transmembrane passes span 26 to 48 (SVCY…SGAT), 58 to 80 (LHPL…ASVL), 89 to 111 (VMGL…NIAH), 126 to 148 (LSTG…SILA), 169 to 191 (RLAY…PTAL), 195 to 214 (IPSV…YALL), and 227 to 249 (CALC…SHMV).

The protein resides in the cell membrane. This is an uncharacterized protein from Treponema pallidum (strain Nichols).